We begin with the raw amino-acid sequence, 399 residues long: Elongation factor Tu (399 aa).

The region spanning 10 to 207 (KPHVNVGTIG…ALDSYIPEPV (198 aa)) is the tr-type G domain. The G1 stretch occupies residues 19–26 (GHIDHGKT). Position 19–26 (19–26 (GHIDHGKT)) interacts with GTP. T26 is a binding site for Mg(2+). The segment at 60–64 (GITIN) is G2. A G3 region spans residues 81-84 (DCPG). GTP contacts are provided by residues 81-85 (DCPGH) and 136-139 (NKVD). Residues 136 to 139 (NKVD) form a G4 region. The tract at residues 174–176 (SAL) is G5.

This sequence belongs to the TRAFAC class translation factor GTPase superfamily. Classic translation factor GTPase family. EF-Tu/EF-1A subfamily. Monomer.

It is found in the cytoplasm. The enzyme catalyses GTP + H2O = GDP + phosphate + H(+). Its function is as follows. GTP hydrolase that promotes the GTP-dependent binding of aminoacyl-tRNA to the A-site of ribosomes during protein biosynthesis. The chain is Elongation factor Tu from Pseudothermotoga lettingae (strain ATCC BAA-301 / DSM 14385 / NBRC 107922 / TMO) (Thermotoga lettingae).